We begin with the raw amino-acid sequence, 1357 residues long: DNA-directed RNA polymerase subunit beta (1357 aa).

This sequence belongs to the RNA polymerase beta chain family. The RNAP catalytic core consists of 2 alpha, 1 beta, 1 beta' and 1 omega subunit. When a sigma factor is associated with the core the holoenzyme is formed, which can initiate transcription.

The enzyme catalyses RNA(n) + a ribonucleoside 5'-triphosphate = RNA(n+1) + diphosphate. DNA-dependent RNA polymerase catalyzes the transcription of DNA into RNA using the four ribonucleoside triphosphates as substrates. The chain is DNA-directed RNA polymerase subunit beta from Pseudomonas fluorescens (strain ATCC BAA-477 / NRRL B-23932 / Pf-5).